The chain runs to 676 residues: Protein timeless (676 aa).

Residues 77 to 108 form a necessary for normal circadian rhythm region; it reads VNTLQKLLNLWFEASLSESSEDNESNTSPPKK. Disordered regions lie at residues 94–145 and 346–398; these read ESSE…CDER and PESI…LVKR. Composition is skewed to low complexity over residues 101-129 and 360-369; these read SNTS…SDNG and QGKPQHQKPP. A Nuclear localization signal motif is present at residues 388 to 398; sequence KELRRKKLVKR.

The protein belongs to the timeless family. As to quaternary structure, forms a heterodimer with period (PER); the complex then translocates into the nucleus. Phosphorylated with a circadian rhythmicity.

The protein resides in the nucleus. It is found in the cytoplasm. Its subcellular location is the perinuclear region. Its function is as follows. Required for the production of circadian rhythms. The biological cycle depends on the rhythmic formation and nuclear localization of the TIM-PER complex. Light induces the degradation of TIM, which promotes elimination of PER. Nuclear activity of the heterodimer coordinatively regulates PER and TIM transcription through a negative feedback loop. Behaves as a negative element in circadian transcriptional loop. Does not appear to bind DNA, suggesting indirect transcriptional inhibition. This Drosophila hydei (Fruit fly) protein is Protein timeless (tim).